Consider the following 925-residue polypeptide: Translation initiation factor IF-2 (925 aa).

The segment at 190–329 is disordered; the sequence is PAAPTSEAAP…RRRDEREAAV (140 aa). 3 stretches are compositionally biased toward pro residues: residues 199–209, 217–238, and 279–288; these read PPEPEPTPLPA, PVRP…PAPR, and RPVPAQPAPQ. A compositionally biased stretch (low complexity) spans 289–307; that stretch reads TPTRSGSGIAKKGAITKAG. Positions 320–329 are enriched in basic and acidic residues; the sequence is RRRDEREAAV. In terms of domain architecture, tr-type G spans 417-589; that stretch reads VRPPVVTIMG…LLLVADYELE (173 aa). A G1 region spans residues 426–433; the sequence is GHVDHGKT. 426–433 contacts GTP; the sequence is GHVDHGKT. Residues 451-455 form a G2 region; the sequence is GITQH. Residues 476–479 are G3; sequence DTPG. Residues 476 to 480 and 530 to 533 contribute to the GTP site; these read DTPGH and NKVD. Residues 530 to 533 are G4; it reads NKVD. The tract at residues 566-568 is G5; the sequence is SAK.

Belongs to the TRAFAC class translation factor GTPase superfamily. Classic translation factor GTPase family. IF-2 subfamily.

The protein resides in the cytoplasm. In terms of biological role, one of the essential components for the initiation of protein synthesis. Protects formylmethionyl-tRNA from spontaneous hydrolysis and promotes its binding to the 30S ribosomal subunits. Also involved in the hydrolysis of GTP during the formation of the 70S ribosomal complex. In Gloeobacter violaceus (strain ATCC 29082 / PCC 7421), this protein is Translation initiation factor IF-2.